Consider the following 258-residue polypeptide: PF03932 family protein CutC (258 aa).

The protein belongs to the CutC family.

The protein resides in the cytoplasm. The protein is PF03932 family protein CutC of Mesorhizobium japonicum (strain LMG 29417 / CECT 9101 / MAFF 303099) (Mesorhizobium loti (strain MAFF 303099)).